A 722-amino-acid chain; its full sequence is Homeobox-leucine zipper protein HDG11 (722 aa).

Residues 1–19 (MSFVVGVGGSGSGSGGDGG) are compositionally biased toward gly residues. A disordered region spans residues 1–42 (MSFVVGVGGSGSGSGGDGGGSHHHDGSETDRKKKRYHRHTAQ). The span at 20–31 (GSHHHDGSETDR) shows a compositional bias: basic and acidic residues. A DNA-binding region (homeobox) is located at residues 32–91 (KKKRYHRHTAQQIQRLESSFKECPHPDEKQRNQLSRELGLAPRQIKFWFQNRRTQLKAQH). Residues 81–161 (QNRRTQLKAQ…LERMSTIASK (81 aa)) adopt a coiled-coil conformation. Positions 227 to 460 (SDMDKPIMTG…LQRMCERFAS (234 aa)) constitute an START domain.

The protein belongs to the HD-ZIP homeobox family. Class IV subfamily. Interacts with BBM. As to expression, expressed in apical meristems and young epidermal tissue including trichomes and stipules. Expressed in lateral root tips, the L1 layer of apical inflorescence meristems and early flower primordia, carpel and petal epidermis, stigma papillae, ovule primordia, nucellus and embryo.

The protein resides in the nucleus. Functionally, transcription factor which acts as a positive regulator of drought stress tolerance. Can transactivate CIPK3, NCED3 and ERECTA. Transactivates several cell-wall-loosening protein genes by directly binding to HD motifs in their promoters. These target genes play important roles in coordinating cell-wall extensibility with root development and growth. Transactivates CYP74A/AOS, AOC3, OPR3 and 4CLL5/OPCL1 genes by directly binding to HD motifs in their promoters. These target genes are involved in jasmonate (JA) biosynthesis, and JA signaling affects root architecture by activating auxin signaling, which promotes lateral root formation. Acts as a negative regulator of trichome branching. Required for the establishment of giant cell identity on the abaxial side of sepals. Seems to promote cell differentiation. May regulate cell differentiation and proliferation during root and shoot meristem development. This Arabidopsis thaliana (Mouse-ear cress) protein is Homeobox-leucine zipper protein HDG11.